We begin with the raw amino-acid sequence, 863 residues long: Adenosylcobalamin biosynthesis bifunctional protein CobDQ (863 aa).

A putative threonine-phosphate decarboxylase region spans residues 1 to 373 (MNLPEHGGNL…LKSRKKTPSI (373 aa)). O-phospho-L-threonine contacts are provided by residues 6-7 (HG), asparagine 30, and asparagine 159. N6-(pyridoxal phosphate)lysine is present on lysine 214. O-phospho-L-threonine contacts are provided by arginine 323 and arginine 337. Residues 374 to 863 (MFQGTASNVG…NLIYRKLGLG (490 aa)) are cobyric acid synthase. The GATase cobBQ-type domain maps to 622 to 810 (RLDVVLIDIP…IHGIFDKDEF (189 aa)). Residue cysteine 704 is the Nucleophile of the active site. Histidine 802 is a catalytic residue.

In the N-terminal section; belongs to the class-II pyridoxal-phosphate-dependent aminotransferase family. The protein in the C-terminal section; belongs to the CobB/CobQ family. CobQ subfamily. Requires pyridoxal 5'-phosphate as cofactor.

The enzyme catalyses O-phospho-L-threonine + H(+) = (R)-1-aminopropan-2-yl phosphate + CO2. It functions in the pathway cofactor biosynthesis; adenosylcobalamin biosynthesis. Its function is as follows. Catalyzes two activities which are involved in the adenosylcobalamin biosynthesis: decarboxylates L-threonine-O-3-phosphate to yield (R)-1-amino-2-propanol O-2-phosphate, the precursor for the linkage between the nucleotide loop and the corrin ring in cobalamin, and catalyzes amidations at positions B, D, E, and G on adenosylcobyrinic A,C-diamide. NH(2) groups are provided by glutamine, and one molecule of ATP is hydrogenolyzed for each amidation. The sequence is that of Adenosylcobalamin biosynthesis bifunctional protein CobDQ (cobDQ) from Leptospira interrogans serogroup Icterohaemorrhagiae serovar Lai (strain 56601).